The primary structure comprises 380 residues: Probable inactive dehydrogenase easA (380 aa).

FMN contacts are provided by residues 25–27 (PMT), A60, Q102, and H171. Substrate contacts are provided by H171 and N174. FMN-binding positions include K223, G299, 324-325 (GR), and R325. Y352 contributes to the substrate binding site.

It belongs to the NADH:flavin oxidoreductase/NADH oxidase family.

Its function is as follows. Probable inactive dehydrogenase; part of the gene cluster that mediates the biosynthesis of fungal ergot alkaloid. DmaW catalyzes the first step of ergot alkaloid biosynthesis by condensing dimethylallyl diphosphate (DMAP) and tryptophan to form 4-dimethylallyl-L-tryptophan. The second step is catalyzed by the methyltransferase easF that methylates 4-dimethylallyl-L-tryptophan in the presence of S-adenosyl-L-methionine, resulting in the formation of 4-dimethylallyl-L-abrine. The catalase easC and the FAD-dependent oxidoreductase easE then transform 4-dimethylallyl-L-abrine to chanoclavine-I which is further oxidized by easD in the presence of NAD(+), resulting in the formation of chanoclavine-I aldehyde. Agroclavine dehydrogenase easG then mediates the conversion of chanoclavine-I aldehyde to agroclavine via a non-enzymatic adduct reaction: the substrate is an iminium intermediate that is formed spontaneously from chanoclavine-I aldehyde in the presence of glutathione. The presence of easA is not required to complete this reaction. Further conversion of agroclavine to paspalic acid is a two-step process involving oxidation of agroclavine to elymoclavine and of elymoclavine to paspalic acid, the second step being performed by the elymoclavine oxidase cloA. Paspalic acid is then further converted to D-lysergic acid. Ergopeptines are assembled from D-lysergic acid and three different amino acids by the D-lysergyl-peptide-synthetases composed each of a monomudular and a trimodular nonribosomal peptide synthetase subunit. LpsB and lpsC encode the monomodular subunits responsible for D-lysergic acid activation and incorporation into the ergopeptine backbone. LpsA1 and A2 subunits encode the trimodular nonribosomal peptide synthetase assembling the tripeptide portion of ergopeptines. LpsA1 is responsible for formation of the major ergopeptine, ergotamine, and lpsA2 for alpha-ergocryptine, the minor ergopeptine of the total alkaloid mixture elaborated by C.purpurea. D-lysergyl-tripeptides are assembled by the nonribosomal peptide synthetases and released as N-(D-lysergyl-aminoacyl)-lactams. Cyclolization of the D-lysergyl-tripeptides is performed by the Fe(2+)/2-ketoglutarate-dependent dioxygenase easH which introduces a hydroxyl group into N-(D-lysergyl-aminoacyl)-lactam at alpha-C of the aminoacyl residue followed by spontaneous condensation with the terminal lactam carbonyl group. In Claviceps purpurea (strain 20.1) (Ergot fungus), this protein is Probable inactive dehydrogenase easA.